Consider the following 412-residue polypeptide: Phosphoglycerate kinase (412 aa).

(2R)-3-phosphoglycerate is bound by residues Val20, Asp21, Phe22, Asn23, Gln35, Arg36, Ser59, His60, Gly62, Arg63, Leu118, Arg119, His166, and Arg167. Gly210 is a binding site for ADP. Residue Gly210 coordinates CDP. AMP contacts are provided by Ala211 and Lys212. Position 211 (Ala211) interacts with ATP. Ala211 contacts Mg(2+). 2 residues coordinate Mg(2+): Ala214 and Asp215. Residue Asp215 coordinates CDP. Lys216 lines the AMP pocket. Residue Lys216 participates in ATP binding. Gly234 lines the ADP pocket. CDP is bound at residue Gly234. Residues Gly235 and Gly308 each contribute to the AMP site. ATP is bound by residues Gly235 and Gly308. Positions 333 and 338 each coordinate CDP. Phe338 serves as a coordination point for ADP. Glu339 contacts AMP. Glu339, Asp370, and Thr371 together coordinate ATP. Residue Asp370 participates in Mg(2+) binding.

This sequence belongs to the phosphoglycerate kinase family. Monomer. Mg(2+) is required as a cofactor.

The protein resides in the cytoplasm. The catalysed reaction is (2R)-3-phosphoglycerate + ATP = (2R)-3-phospho-glyceroyl phosphate + ADP. Its pathway is carbohydrate degradation; glycolysis; pyruvate from D-glyceraldehyde 3-phosphate: step 2/5. Its function is as follows. Catalyzes one of the two ATP producing reactions in the glycolytic pathway via the reversible conversion of 1,3-diphosphoglycerate to 3-phosphoglycerate. In addition to its role as a glycolytic enzyme, it seems that PGK-1 acts as a polymerase alpha cofactor protein (primer recognition protein). May play a role in sperm motility. The sequence is that of Phosphoglycerate kinase (PGK) from Aplysia californica (California sea hare).